We begin with the raw amino-acid sequence, 160 residues long: Peripheral myelin protein 22 (160 aa).

Position 1 (Met1) is a topological domain, cytoplasmic. The chain crosses the membrane as a helical span at residues 2–31; the sequence is LLLLLGILFLHIAVLVLLFVSTIVSQWLVG. The Extracellular portion of the chain corresponds to 32-64; that stretch reads NGHRTDLWQNCTTSALGAVQHCYSSSVSEWLQS. The N-linked (GlcNAc...) asparagine glycan is linked to Asn41. A helical membrane pass occupies residues 65 to 91; it reads VQATMILSVIFSVLSLFLFFCQLFTLT. The Cytoplasmic portion of the chain corresponds to 92–95; the sequence is KGGR. A helical membrane pass occupies residues 96–119; the sequence is FYITGVFQILAGLCVMSAAAIYTV. Residues 120–133 lie on the Extracellular side of the membrane; the sequence is RHSEWHVNNDYSYG. Residues 134–156 traverse the membrane as a helical segment; sequence FAYILAWVAFPLALLSGIIYVIL. Topologically, residues 157–160 are cytoplasmic; sequence RKRE.

Belongs to the PMP-22/EMP/MP20 family. In terms of processing, ubiquitinated by the DCX(DCAF13) E3 ubiquitin ligase complex, leading to its degradation. Found exclusively in the peripheral nervous system. Present in both myelinating and nonmyelinating Schwann cells. Found in the tumors of Schwann cell lineage where axons are present (neurofibromas) but not where axons are absent (schwannomas).

The protein resides in the cell membrane. In terms of biological role, might be involved in growth regulation, and in myelinization in the peripheral nervous system. This Rattus norvegicus (Rat) protein is Peripheral myelin protein 22 (Pmp22).